The chain runs to 182 residues: Protein GrpE (182 aa).

Residues 1–17 (MEEKKRCEESEKIKEQE) are compositionally biased toward basic and acidic residues. The disordered stretch occupies residues 1-33 (MEEKKRCEESEKIKEQENETLPNEDSPSMGKKV).

Belongs to the GrpE family. In terms of assembly, homodimer.

The protein localises to the cytoplasm. Functionally, participates actively in the response to hyperosmotic and heat shock by preventing the aggregation of stress-denatured proteins, in association with DnaK and GrpE. It is the nucleotide exchange factor for DnaK and may function as a thermosensor. Unfolded proteins bind initially to DnaJ; upon interaction with the DnaJ-bound protein, DnaK hydrolyzes its bound ATP, resulting in the formation of a stable complex. GrpE releases ADP from DnaK; ATP binding to DnaK triggers the release of the substrate protein, thus completing the reaction cycle. Several rounds of ATP-dependent interactions between DnaJ, DnaK and GrpE are required for fully efficient folding. This Borrelia hermsii (strain HS1 / DAH) protein is Protein GrpE.